The sequence spans 377 residues: Serine protease grass (377 aa).

Residues 1 to 26 (MMIASSLAVLYGIAIVSSMGVQSARA) form the signal peptide. The Clip domain maps to 31-89 (DCTTPDGDQGQCMPFSSCRTIEERLTEAQKAGQKVPADYASYLQKALCGEFNGVRHFCC). 6 disulfide bridges follow: Cys32–Cys88, Cys42–Cys78, Cys48–Cys89, Cys111–Cys243, Cys148–Cys164, and Cys188–Cys197. The interval 91 to 118 (SANIQHNSKVMSLFKDENFDCGNFLSQR) is linker. The Peptidase S1 domain occupies 119 to 373 (VSNGYEVKLS…YVQWITDTMA (255 aa)). His163 (charge relay system) is an active-site residue. Ca(2+)-binding residues include Glu179, Arg181, Thr184, and Asp187. The active-site Charge relay system is Asp223. N-linked (GlcNAc...) asparagine glycosylation is found at Asn230 and Asn270. Disulfide bonds link Cys290/Cys304 and Cys314/Cys349. Catalysis depends on Ser318, which acts as the Charge relay system.

It belongs to the peptidase S1 family. CLIP subfamily. Post-translationally, proteolytically cleaved by a tryspin-like protease which is likely to activate grass.

Its subcellular location is the secreted. Functionally, endopeptidase. Plays a key role in innate immunity by activating the Toll pathway in response to fungal and Gram-positive bacterial infections, presumably downstream of pattern-recognition receptors (PRR), such as PGRP-SA, GNBP1 and GNBP3, and upstream of spz processing enzyme SPE. This chain is Serine protease grass, found in Drosophila melanogaster (Fruit fly).